The primary structure comprises 195 residues: Ephrin-A2 (195 aa).

Residues 1–16 form the signal peptide; that stretch reads MELSLVVFTVVCWVSV. The 134-residue stretch at 24–157 folds into the Ephrin RBD domain; the sequence is SDRHAVYWNS…KLKVYVKPTS (134 aa). N-linked (GlcNAc...) asparagine glycosylation occurs at asparagine 32. 2 cysteine pairs are disulfide-bonded: cysteine 57–cysteine 97 and cysteine 85–cysteine 146. Cysteine 174 carries GPI-anchor amidated cysteine lipidation. Positions 175 to 195 are cleaved as a propeptide — removed in mature form; the sequence is GADGPCLAVLMLLLVFLLAGV.

It belongs to the ephrin family. In terms of assembly, binds to the receptor tyrosine kinases epha2, epha3, epha4 and epha5. Interacts with epha8; activates epha8. As to expression, widespread expression in the embryo.

The protein localises to the cell membrane. In terms of biological role, cell surface GPI-bound ligand for Eph receptors, a family of receptor tyrosine kinases which are crucial for migration, repulsion and adhesion during neuronal, vascular and epithelial development. Binds promiscuously Eph receptors residing on adjacent cells, leading to contact-dependent bidirectional signaling into neighboring cells. The signaling pathway downstream of the receptor is referred to as forward signaling while the signaling pathway downstream of the ephrin ligand is referred to as reverse signaling. With the epha2 receptor may play a role in bone remodeling through regulation of osteoclastogenesis and osteoblastogenesis. The protein is Ephrin-A2 (efna2) of Danio rerio (Zebrafish).